Here is a 435-residue protein sequence, read N- to C-terminus: Centrosomal protein of 55 kDa (435 aa).

3 disordered regions span residues 1-63, 213-239, and 268-287; these read MAAK…TDKA, HKEAKSDDQSAQKVQQELEAERNKVSR, and ERRREREDRKSSVERDALLQ. 2 coiled-coil regions span residues 18–140 and 185–373; these read SSSS…KNKY and EAYV…RESR. Composition is skewed to basic and acidic residues over residues 26–49 and 213–222; these read AELEVEKLKRENQQMKKSLEDMKR and HKEAKSDDQS.

It localises to the cytoplasm. The protein resides in the cytoskeleton. Its subcellular location is the microtubule organizing center. It is found in the centrosome. The protein localises to the centriole. It localises to the cleavage furrow. The protein resides in the midbody. Its subcellular location is the midbody ring. Plays a role in mitotic exit and cytokinesis. Recruits PDCD6IP and TSG101 to midbody during cytokinesis. Required for successful completion of cytokinesis. Not required for microtubule nucleation. Plays a role in the development of the brain and kidney. In Danio rerio (Zebrafish), this protein is Centrosomal protein of 55 kDa.